The following is a 612-amino-acid chain: Mineralocorticoid receptor (612 aa).

Residues 1-228 (GNEIADSTVS…STGPSRPSKV (228 aa)) form a modulating region. Residues cysteine 229, cysteine 232, cysteine 246, cysteine 249, cysteine 269, cysteine 275, cysteine 285, and cysteine 288 each coordinate Zn(2+). NR C4-type zinc fingers lie at residues 229–249 (CLVC…CGSC) and 269–293 (CAGR…LQKC). Residues 229–298 (CLVCGDEASG…RLQKCLQAGM (70 aa)) constitute a DNA-binding region (nuclear receptor). The hinge stretch occupies residues 299–349 (NLGARKSKKLGKLKGVHEEHPQQPLQQTPTASPKEDTTLTSSSKEPSANSN). Positions 310–348 (KLKGVHEEHPQQPLQQTPTASPKEDTTLTSSSKEPSANS) are disordered. Residues 339–348 (SSSKEPSANS) show a composition bias toward low complexity. In terms of domain architecture, NR LBD spans 350–592 (SLVPLISAVS…EFPAMLVEII (243 aa)). Positions 398 and 404 each coordinate 21-hydroxyprogesterone. Asparagine 398 and glutamine 404 together coordinate aldosterone. The progesterone site is built by asparagine 398 and glutamine 404. The interval 410–413 (KWAK) is important for coactivator binding. Arginine 445 and threonine 573 together coordinate 21-hydroxyprogesterone. Aldosterone-binding residues include arginine 445 and threonine 573. 2 residues coordinate progesterone: arginine 445 and threonine 573.

The protein belongs to the nuclear hormone receptor family. NR3 subfamily.

It localises to the cytoplasm. It is found in the nucleus. Functionally, receptor for both mineralocorticoids (MC) such as aldosterone and glucocorticoids (GC) such as corticosterone or cortisol. Binds to mineralocorticoid response elements (MRE) and transactivates target genes. The effect of MC is to increase ion and water transport and thus raise extracellular fluid volume and blood pressure and lower potassium levels. In Xenopus laevis (African clawed frog), this protein is Mineralocorticoid receptor (nr3c2).